The following is a 196-amino-acid chain: Putative NADH dehydrogenase/NAD(P)H nitroreductase SGR_2476 (196 aa).

The protein belongs to the nitroreductase family. HadB/RutE subfamily. FMN is required as a cofactor.

This chain is Putative NADH dehydrogenase/NAD(P)H nitroreductase SGR_2476, found in Streptomyces griseus subsp. griseus (strain JCM 4626 / CBS 651.72 / NBRC 13350 / KCC S-0626 / ISP 5235).